Reading from the N-terminus, the 450-residue chain is MSESQPMMDIASPGSTGKEKKTPKAKENKEKKTTTPKEPKVTKTKEPKQPKEPKQTKEPKQPKQSKESKEPKVSKEKKTPATPKEPKDQKDTKEQKPKKLTKKQLAAQQSVTTVAPPLGTPPPPTTATTTTTTATTSTSSTSTSNSQPSTPSILDLPSPSQSTKKQRISTPSTASANKKPTVNKTSKKIEQSEDDESADNDDDEDEDDDDDDNNSKNKKKNNNNNNDEEDEDEDEDEESESDSDFEKSNRKRKKIFQKNKNRGRLQSDDDDEDGSGSGSDEDSDEDSDDSDSDESDSDDSDSDSDSDSDSDSDSDSSEGEGNDDDDDESTFNLSEMQVRENTQMNTLIKHFSEDQQTRFEYYKRSSFQRANIKKVMQSVLSAPVNQTSAIVMGGIAKVFVGEIVELARSIMEEWRETGPIRPRHIREAYRRLKESNSIPYYKKSVPKSMK.

Positions 1–329 are disordered; the sequence is MSESQPMMDI…EGNDDDDDES (329 aa). Residues 17-97 are compositionally biased toward basic and acidic residues; the sequence is GKEKKTPKAK…DQKDTKEQKP (81 aa). 2 stretches are compositionally biased toward low complexity: residues 103 to 117 and 126 to 152; these read KQLA…VAPP and TATT…STPS. A compositionally biased stretch (polar residues) spans 158-184; it reads SPSQSTKKQRISTPSTASANKKPTVNK. Acidic residues-rich tracts occupy residues 192–212 and 226–243; these read SEDD…DDDD and NDEE…ESDS. Basic residues predominate over residues 249–263; sequence NRKRKKIFQKNKNRG. Residues 268 to 329 are compositionally biased toward acidic residues; the sequence is DDDDEDGSGS…EGNDDDDDES (62 aa).

This sequence belongs to the TAF11 family. As to quaternary structure, belongs to the TFIID complex which is composed of TATA binding protein (Tbp) and a number of TBP-associated factors (TAFs).

It is found in the nucleus. TFIID is a multimeric protein complex that plays a central role in mediating promoter responses to various activators and repressors. In Dictyostelium discoideum (Social amoeba), this protein is Transcription initiation factor TFIID subunit 11 (taf11).